A 512-amino-acid polypeptide reads, in one-letter code: Maturase K (512 aa).

Belongs to the intron maturase 2 family. MatK subfamily.

The protein resides in the plastid. It localises to the chloroplast. Usually encoded in the trnK tRNA gene intron. Probably assists in splicing its own and other chloroplast group II introns. The polypeptide is Maturase K (Oenothera argillicola (Appalachian evening primrose)).